Here is a 78-residue protein sequence, read N- to C-terminus: Antitoxin VapB1 (78 aa).

A SpoVT-AbrB domain is found at 3–44 (TKVFQSGNSQAVRIPMDFRFDVDTVEIFRKENGDVVLRPVSK).

This sequence belongs to the VapB family. Forms multimers, as well forming as a complex with VapC1.

Antitoxin component of a type II toxin-antitoxin (TA) system. Upon expression in E.coli neutralizes the effect of toxin VapC1. In vitro inhibits the RNase activity of VapC1. The sequence is that of Antitoxin VapB1 (vapB1) from Haemophilus influenzae (strain R2866).